The following is a 165-amino-acid chain: Nucleotide-binding protein PMN2A_1813 (165 aa).

This sequence belongs to the YajQ family.

Nucleotide-binding protein. The polypeptide is Nucleotide-binding protein PMN2A_1813 (Prochlorococcus marinus (strain NATL2A)).